Consider the following 486-residue polypeptide: MSKDIRVRYAPSPTGLLHIGNARTALFNYLYARHHGGTFLIRIEDTDRKRHVEDGERSQLENLRWLGMDWDESPESHENYRQSERLDLYQKYIDQLLAEGKAYKSYVTEEELAAERERQEVAGETPRYINEYLGMSEEEKAAYIAEREAAGIIPTVRLAVNESGIYKWHDMVKGDIEFEGGNIGGDWIIQKKDGYPTYNFAVAIDDHDMQISHVIRGDDHIANTPKQLMVYEALGWEAPEFGHMTLIINSETGKKLSKRDTNTLQFIEDYRKKGYLPEAVFNFIALLGWNPGGEDEIFSREELIKLFDENRLSKSPAAFDQKKLDWMSNDYIKNADLETIFEMAKPFLEEAGRLTDKAEKLVELYKPQMKSVDEIIPLTDLFFSDFPELTEAEREVMTGETVPTVLEAFKAKLEAMTDDKFVTENIFPQIKAVQKETGIKGKNLFMPIRIAVSGEMHGPELPDTIFLLGREKSIQHIENMLKEISK.

The 'HIGH' region motif lies at 11-21; sequence PSPTGLLHIGN. The short motif at 255–259 is the 'KMSKS' region element; the sequence is KLSKR. An ATP-binding site is contributed by K258.

Belongs to the class-I aminoacyl-tRNA synthetase family. Glutamate--tRNA ligase type 1 subfamily. As to quaternary structure, monomer.

It is found in the cytoplasm. It carries out the reaction tRNA(Glu) + L-glutamate + ATP = L-glutamyl-tRNA(Glu) + AMP + diphosphate. Catalyzes the attachment of glutamate to tRNA(Glu) in a two-step reaction: glutamate is first activated by ATP to form Glu-AMP and then transferred to the acceptor end of tRNA(Glu). The polypeptide is Glutamate--tRNA ligase (Streptococcus pneumoniae (strain ATCC BAA-255 / R6)).